A 51-amino-acid chain; its full sequence is MSRNKELGRKIRLMKKIKQNRRVPGWVMMRTARKVTQNPLRRNWRRGSLKI.

It belongs to the eukaryotic ribosomal protein eL39 family.

The sequence is that of Large ribosomal subunit protein eL39 (rpl39e) from Thermoplasma acidophilum (strain ATCC 25905 / DSM 1728 / JCM 9062 / NBRC 15155 / AMRC-C165).